The chain runs to 200 residues: 3-isopropylmalate dehydratase small subunit (200 aa).

The protein belongs to the LeuD family. LeuD type 1 subfamily. As to quaternary structure, heterodimer of LeuC and LeuD.

The enzyme catalyses (2R,3S)-3-isopropylmalate = (2S)-2-isopropylmalate. It participates in amino-acid biosynthesis; L-leucine biosynthesis; L-leucine from 3-methyl-2-oxobutanoate: step 2/4. In terms of biological role, catalyzes the isomerization between 2-isopropylmalate and 3-isopropylmalate, via the formation of 2-isopropylmaleate. The chain is 3-isopropylmalate dehydratase small subunit from Campylobacter jejuni subsp. jejuni serotype O:23/36 (strain 81-176).